The sequence spans 878 residues: AP-2 complex subunit alpha (878 aa).

The protein belongs to the adaptor complexes large subunit family. In terms of assembly, adaptor protein complex 2 (AP-2) is a heterotetramer composed of two large adaptins (alpha-type subunit apl3 and beta-type subunit apl1), a medium chain (mu-type subunit apm4) and a small adaptin (sigma-type subunit aps2).

Its subcellular location is the cell membrane. It is found in the membrane. The protein localises to the coated pit. Adaptins are components of the adaptor complexes which link clathrin to receptors in coated vesicles. Clathrin-associated protein complexes are believed to interact with the cytoplasmic tails of membrane proteins, leading to their selection and concentration. Alpha adaptin is a subunit of the plasma membrane adaptor. The sequence is that of AP-2 complex subunit alpha (apl3) from Schizosaccharomyces pombe (strain 972 / ATCC 24843) (Fission yeast).